Here is a 574-residue protein sequence, read N- to C-terminus: WAP, Kazal, immunoglobulin, Kunitz and NTR domain-containing protein 2 (574 aa).

Residues 1–32 (MWALRGCRSGSRWGQGAALLLLLLGVPPRGLA) form the signal peptide. One can recognise a WAP domain in the interval 37–90 (RYSHAGICPNDMNPNLWVDAQSTCKRECETDQECETYEKCCPNVCGTKSCVAAR). 17 cysteine pairs are disulfide-bonded: Cys-44/Cys-77, Cys-60/Cys-81, Cys-64/Cys-76, Cys-70/Cys-86, Cys-132/Cys-162, Cys-136/Cys-155, Cys-144/Cys-173, Cys-229/Cys-285, Cys-326/Cys-376, Cys-335/Cys-359, Cys-351/Cys-372, Cys-384/Cys-434, Cys-393/Cys-417, Cys-409/Cys-430, Cys-443/Cys-513, Cys-446/Cys-515, and Cys-457/Cys-564. The Kazal-like domain maps to 124 to 175 (WDGQPVCKCRDRCEKEPSFTCASDGLTYYNRCYMDAEACSKGITLAVVTCRY). The Ig-like C2-type domain maps to 208-301 (PALLNHPAHQ…GVLRADFPLS (94 aa)). BPTI/Kunitz inhibitor domains follow at residues 326-376 (CLKP…MLAC) and 384-434 (CSLP…EESC). The NTR domain maps to 443-564 (CRACKPRQKL…LREVMHKKTC (122 aa)). A glycan (N-linked (GlcNAc...) asparagine) is linked at Asn-517.

This sequence belongs to the WFIKKN family. As to quaternary structure, interacts with both mature and propeptide myostatin/MSTN.

It is found in the secreted. Protease-inhibitor that contains multiple distinct protease inhibitor domains. Probably has serine protease- and metalloprotease-inhibitor activity. Inhibits the biological activity of mature myostatin, but not activin. In Bos taurus (Bovine), this protein is WAP, Kazal, immunoglobulin, Kunitz and NTR domain-containing protein 2 (WFIKKN2).